The sequence spans 358 residues: WD repeat-containing protein 53 (358 aa).

WD repeat units lie at residues 1-38 (MAVKWTGGHSSPVLCLNASKEGLLASGAEGGDLTAWGE), 43-80 (LGHTRFQGADDVTSVLFSPSCPTKLYASHGETISVLDV), 85-123 (DSLDHFHVNEEEINCLSLNQTENLLASADDSGAIKILDL), 127-166 (KVIRSLKRHSNICSSVAFRPQRPQSLVSCGLDMQVMLWSL), 173-225 (WITN…RIFR), and 232-270 (EQELGFKGHTSGVSQVCFLPESYLLLTGGNDGKITLWDA). The disordered stretch occupies residues 273–311 (EVEKKQKSPTKRTHRKKPKRGTCTKQGGNTNASVTDEEE). Basic residues predominate over residues 279–294 (KSPTKRTHRKKPKRGT). Over residues 295–306 (CTKQGGNTNASV) the composition is skewed to polar residues. Residues 314 to 355 (NILPKLNIEHGEKVNWLLGTKIKGHQNILVADQTSCISVYPL) form a WD 7 repeat.

This sequence belongs to the WD repeat WDR53 family.

The polypeptide is WD repeat-containing protein 53 (WDR53) (Homo sapiens (Human)).